We begin with the raw amino-acid sequence, 769 residues long: Neprilysin-21 (769 aa).

Residues 1–26 lie on the Cytoplasmic side of the membrane; sequence MKPENGAATWHPAKRSCLGRLTTLET. A helical; Signal-anchor for type II membrane protein membrane pass occupies residues 27–47; it reads LLLVFLGLLITALLSVLFLWL. Over 48 to 769 the chain is Extracellular; the sequence is WVLDGYKTFT…MNPERKCQVW (722 aa). N-linked (GlcNAc...) asparagine glycosylation is present at Asn-69. Residues 85–769 form the Peptidase M13 domain; it reads VCTSRECVRL…MNPERKCQVW (685 aa). 5 disulfides stabilise this stretch: Cys-86–Cys-91, Cys-109–Cys-754, Cys-117–Cys-714, Cys-173–Cys-428, and Cys-638–Cys-766. Residues Asn-221, Asn-240, Asn-272, Asn-307, Asn-356, Asn-412, and Asn-506 are each glycosylated (N-linked (GlcNAc...) asparagine). His-601 contacts Zn(2+). The active site involves Glu-602. Zn(2+) contacts are provided by His-605 and Glu-663. The active-site Proton donor is the Asp-667. N-linked (GlcNAc...) asparagine glycans are attached at residues Asn-684 and Asn-698.

This sequence belongs to the peptidase M13 family. It depends on Zn(2+) as a cofactor.

Its subcellular location is the cell membrane. In terms of biological role, probable cell surface protease. The chain is Neprilysin-21 (nep-21) from Caenorhabditis elegans.